Reading from the N-terminus, the 468-residue chain is Dimethylamine methyltransferase MtbB2 (468 aa).

A non-standard amino acid (pyrrolysine) is located at residue Pyl356.

Belongs to the dimethylamine methyltransferase family.

It catalyses the reaction Co(I)-[dimethylamine-specific corrinoid protein] + dimethylamine + H(+) = methyl-Co(III)-[dimethylamine-specific corrinoid protein] + methylamine. Its pathway is one-carbon metabolism; methanogenesis from dimethylamine. In terms of biological role, catalyzes the transfer of a methyl group from dimethylamine to the corrinoid cofactor of MtbC. The polypeptide is Dimethylamine methyltransferase MtbB2 (mtbB2) (Methanosarcina acetivorans (strain ATCC 35395 / DSM 2834 / JCM 12185 / C2A)).